A 389-amino-acid chain; its full sequence is Flap endonuclease 1 (389 aa).

The interval 1 to 105 is N-domain; it reads MGIKGLTALM…GELAKRKDKR (105 aa). Asp-34 provides a ligand contact to Mg(2+). DNA is bound at residue Arg-71. Residues Asp-87, Glu-159, Glu-161, Asp-180, and Asp-182 each contribute to the Mg(2+) site. Residues 123 to 254 form an I-domain region; the sequence is EVEKLSKRTV…KTALKLIKEH (132 aa). Glu-159 serves as a coordination point for DNA. Positions 232 and 234 each coordinate DNA. Position 234 (Asp-234) interacts with Mg(2+). Residues 338–346 form an interaction with PCNA region; sequence SQNRLESFF. Residues 356 to 389 are disordered; the sequence is IGKRKVEEKKGKNGKAGLANKKSKGVSGFRRSKN.

This sequence belongs to the XPG/RAD2 endonuclease family. FEN1 subfamily. As to quaternary structure, interacts with PCNA. Three molecules of FEN1 bind to one PCNA trimer with each molecule binding to one PCNA monomer. PCNA stimulates the nuclease activity without altering cleavage specificity. Mg(2+) serves as cofactor. Phosphorylated. Phosphorylation upon DNA damage induces relocalization to the nuclear plasma.

The protein localises to the nucleus. It localises to the nucleolus. It is found in the nucleoplasm. The protein resides in the mitochondrion. Functionally, structure-specific nuclease with 5'-flap endonuclease and 5'-3' exonuclease activities involved in DNA replication and repair. During DNA replication, cleaves the 5'-overhanging flap structure that is generated by displacement synthesis when DNA polymerase encounters the 5'-end of a downstream Okazaki fragment. It enters the flap from the 5'-end and then tracks to cleave the flap base, leaving a nick for ligation. Also involved in the long patch base excision repair (LP-BER) pathway, by cleaving within the apurinic/apyrimidinic (AP) site-terminated flap. Acts as a genome stabilization factor that prevents flaps from equilibrating into structures that lead to duplications and deletions. Also possesses 5'-3' exonuclease activity on nicked or gapped double-stranded DNA, and exhibits RNase H activity. Also involved in replication and repair of rDNA and in repairing mitochondrial DNA. The sequence is that of Flap endonuclease 1 from Ostreococcus lucimarinus (strain CCE9901).